We begin with the raw amino-acid sequence, 190 residues long: dTTP/UTP pyrophosphatase (190 aa).

Asp70 acts as the Proton acceptor in catalysis.

It belongs to the Maf family. YhdE subfamily. It depends on a divalent metal cation as a cofactor.

Its subcellular location is the cytoplasm. The catalysed reaction is dTTP + H2O = dTMP + diphosphate + H(+). It carries out the reaction UTP + H2O = UMP + diphosphate + H(+). Functionally, nucleoside triphosphate pyrophosphatase that hydrolyzes dTTP and UTP. May have a dual role in cell division arrest and in preventing the incorporation of modified nucleotides into cellular nucleic acids. In Paramagnetospirillum magneticum (strain ATCC 700264 / AMB-1) (Magnetospirillum magneticum), this protein is dTTP/UTP pyrophosphatase.